We begin with the raw amino-acid sequence, 158 residues long: Peptide methionine sulfoxide reductase MsrA (158 aa).

C10 is an active-site residue.

Belongs to the MsrA Met sulfoxide reductase family.

The enzyme catalyses L-methionyl-[protein] + [thioredoxin]-disulfide + H2O = L-methionyl-(S)-S-oxide-[protein] + [thioredoxin]-dithiol. It catalyses the reaction [thioredoxin]-disulfide + L-methionine + H2O = L-methionine (S)-S-oxide + [thioredoxin]-dithiol. Has an important function as a repair enzyme for proteins that have been inactivated by oxidation. Catalyzes the reversible oxidation-reduction of methionine sulfoxide in proteins to methionine. The sequence is that of Peptide methionine sulfoxide reductase MsrA from Alkaliphilus metalliredigens (strain QYMF).